We begin with the raw amino-acid sequence, 119 residues long: Large ribosomal subunit protein bL20 (119 aa).

Belongs to the bacterial ribosomal protein bL20 family.

Functionally, binds directly to 23S ribosomal RNA and is necessary for the in vitro assembly process of the 50S ribosomal subunit. It is not involved in the protein synthesizing functions of that subunit. The protein is Large ribosomal subunit protein bL20 of Acinetobacter baumannii (strain SDF).